Reading from the N-terminus, the 314-residue chain is Homoserine kinase (314 aa).

Residue 95–105 (PHSRGLGSSAS) coordinates ATP.

This sequence belongs to the GHMP kinase family. Homoserine kinase subfamily.

The protein resides in the cytoplasm. The enzyme catalyses L-homoserine + ATP = O-phospho-L-homoserine + ADP + H(+). Its pathway is amino-acid biosynthesis; L-threonine biosynthesis; L-threonine from L-aspartate: step 4/5. Functionally, catalyzes the ATP-dependent phosphorylation of L-homoserine to L-homoserine phosphate. The polypeptide is Homoserine kinase (Mycobacterium ulcerans (strain Agy99)).